The primary structure comprises 231 residues: 2,3,4,5-tetrahydropyridine-2,6-dicarboxylate N-acetyltransferase (231 aa).

Belongs to the transferase hexapeptide repeat family. DapH subfamily.

The enzyme catalyses (S)-2,3,4,5-tetrahydrodipicolinate + acetyl-CoA + H2O = L-2-acetamido-6-oxoheptanedioate + CoA. It participates in amino-acid biosynthesis; L-lysine biosynthesis via DAP pathway; LL-2,6-diaminopimelate from (S)-tetrahydrodipicolinate (acetylase route): step 1/3. Its function is as follows. Catalyzes the transfer of an acetyl group from acetyl-CoA to tetrahydrodipicolinate. This chain is 2,3,4,5-tetrahydropyridine-2,6-dicarboxylate N-acetyltransferase, found in Thermosipho melanesiensis (strain DSM 12029 / CIP 104789 / BI429).